Here is a 161-residue protein sequence, read N- to C-terminus: Dihydrofolate reductase (161 aa).

In terms of domain architecture, DHFR spans Met-1–Arg-160. Ile-7–Ala-9 contributes to the substrate binding site. NADP(+)-binding positions include Trp-8 to Ala-9 and Ile-16 to Asp-21. Substrate-binding residues include Asp-29 and Arg-34. NADP(+) is bound at residue Gly-45–Thr-48. Arg-62 is a binding site for substrate. Residues Leu-67–Gln-70, Gly-82, and Ile-96–Val-101 each bind NADP(+). Tyr-102 and Thr-115 together coordinate substrate.

The protein belongs to the dihydrofolate reductase family.

It catalyses the reaction (6S)-5,6,7,8-tetrahydrofolate + NADP(+) = 7,8-dihydrofolate + NADPH + H(+). It functions in the pathway cofactor biosynthesis; tetrahydrofolate biosynthesis; 5,6,7,8-tetrahydrofolate from 7,8-dihydrofolate: step 1/1. Key enzyme in folate metabolism. Catalyzes an essential reaction for de novo glycine and purine synthesis, and for DNA precursor synthesis. The sequence is that of Dihydrofolate reductase (folA) from Mycobacterium tuberculosis (strain CDC 1551 / Oshkosh).